Here is a 70-residue protein sequence, read N- to C-terminus: DNA gyrase inhibitor YacG (70 aa).

Residues cysteine 9, cysteine 12, cysteine 28, and cysteine 32 each contribute to the Zn(2+) site. The segment at 44–70 is disordered; the sequence is SRKIPGSSIDPESIVTTNNKQDNVDEQ.

It belongs to the DNA gyrase inhibitor YacG family. Interacts with GyrB. Zn(2+) serves as cofactor.

Inhibits all the catalytic activities of DNA gyrase by preventing its interaction with DNA. Acts by binding directly to the C-terminal domain of GyrB, which probably disrupts DNA binding by the gyrase. The protein is DNA gyrase inhibitor YacG of Legionella pneumophila subsp. pneumophila (strain Philadelphia 1 / ATCC 33152 / DSM 7513).